The following is a 652-amino-acid chain: ATP-dependent zinc metalloprotease FtsH 1 (652 aa).

Residues 1–9 (MSDNKWLRN) are Cytoplasmic-facing. The helical transmembrane segment at 10 to 30 (GFVWMILIIAAIAVWVTFVQG) threads the bilayer. Over 31–110 (GRGGATITTQ…QTHRASQWGN (80 aa)) the chain is Extracellular. Residues 111 to 131 (VLGTLTFLLPTLFLIGVIIFM) form a helical membrane-spanning segment. The Cytoplasmic segment spans residues 132-652 (MRQAQGTNNQ…VPHIKPQPAS (521 aa)). An ATP-binding site is contributed by 203-210 (GPPGTGKT). His-425 lines the Zn(2+) pocket. Residue Glu-426 is part of the active site. His-429 and Asp-501 together coordinate Zn(2+). Residues 623 to 652 (IATPETARPDSPSEARPAAPVPHIKPQPAS) are disordered. The span at 641 to 652 (APVPHIKPQPAS) shows a compositional bias: pro residues.

In the central section; belongs to the AAA ATPase family. It in the C-terminal section; belongs to the peptidase M41 family. Homohexamer. The cofactor is Zn(2+).

It localises to the cell membrane. In terms of biological role, acts as a processive, ATP-dependent zinc metallopeptidase for both cytoplasmic and membrane proteins. Plays a role in the quality control of integral membrane proteins. This chain is ATP-dependent zinc metalloprotease FtsH 1, found in Thermomicrobium roseum (strain ATCC 27502 / DSM 5159 / P-2).